Consider the following 338-residue polypeptide: MTLNIGVIGTGAIGQDHIRRCSFALSGAKVVAVNDINLEQAKKVVNDLGIGAEVYADAHELINAANVEAILVTSWGPTHEEFVLAAIKAGKPVFCEKPLAVTAQGCKNIVDAETAFGKRLVQVGFMRPYDQGYRALKAVIDSGRIGEPLMLHCAHRNARVGQAYATDMAITDTLIHEINVLSWLLDDHYVSAQVIFPRKSARALAHLKDPQIVLLETAKGTRIDVEVFVNCQYGYDIQCEVVGETGIARLPEPSSVQLRSEARLSNEILVDWKDRFIAAYDVELQDFIDAVGAGRLTGPSAWDGYTAAVTADACVAAQGSGKVEPIVLPERPAFYAPA.

Belongs to the Gfo/Idh/MocA family. In terms of assembly, homotetramer.

The catalysed reaction is myo-inositol + NAD(+) = scyllo-inosose + NADH + H(+). Its function is as follows. Involved in the oxidation of myo-inositol (MI) to 2-keto-myo-inositol (2KMI or 2-inosose). This is Inositol 2-dehydrogenase from Azotobacter vinelandii (strain DJ / ATCC BAA-1303).